We begin with the raw amino-acid sequence, 222 residues long: Large ribosomal subunit protein mL64 (222 aa).

Disordered stretches follow at residues 21–47 (RSRS…NLLT) and 186–222 (QRKR…EPSS). Residues 98 to 207 (TMQESLRLQQ…KKEARIAAMA (110 aa)) adopt a coiled-coil conformation. The short motif at 184–200 (KQQRKRLKEERQRQKKE) is the Nuclear localization signal element. Over residues 186-202 (QRKRLKEERQRQKKEAR) the composition is skewed to basic and acidic residues. Residues 203–215 (IAAMASAEAQDSA) show a composition bias toward low complexity.

This sequence belongs to the mitochondrion-specific ribosomal protein mL64 family. Component of the mitochondrial ribosome large subunit (39S) which comprises a 16S rRNA and about 50 distinct proteins. Interacts with GADD45A, GADD45B and GADD45G. Interacts with NR4A1 via the NR4A1 AB domain. Interacts with ATAD3A and ATAD3B.

The protein resides in the mitochondrion. Its subcellular location is the nucleus. Functionally, acts as a negative regulator of G1 to S cell cycle phase progression by inhibiting cyclin-dependent kinases. Inhibitory effects are additive with GADD45 proteins but also occur in the absence of GADD45 proteins. Acts as a repressor of the orphan nuclear receptor NR4A1 by inhibiting AB domain-mediated transcriptional activity. May be involved in the hormone-mediated regulation of NR4A1 transcriptional activity. May play a role in mitochondrial protein synthesis. This Mus musculus (Mouse) protein is Large ribosomal subunit protein mL64 (Gadd45gip1).